Here is a 146-residue protein sequence, read N- to C-terminus: 3-dehydroquinate dehydratase (146 aa).

The Proton acceptor role is filled by Y24. Positions 73, 79, and 86 each coordinate substrate. The Proton donor role is filled by H99. Residues 100–101 and R110 each bind substrate; that span reads LS.

Belongs to the type-II 3-dehydroquinase family. In terms of assembly, homododecamer.

The enzyme catalyses 3-dehydroquinate = 3-dehydroshikimate + H2O. It functions in the pathway metabolic intermediate biosynthesis; chorismate biosynthesis; chorismate from D-erythrose 4-phosphate and phosphoenolpyruvate: step 3/7. Functionally, catalyzes a trans-dehydration via an enolate intermediate. The sequence is that of 3-dehydroquinate dehydratase from Shewanella oneidensis (strain ATCC 700550 / JCM 31522 / CIP 106686 / LMG 19005 / NCIMB 14063 / MR-1).